A 103-amino-acid chain; its full sequence is Large ribosomal subunit protein bL21 (103 aa).

This sequence belongs to the bacterial ribosomal protein bL21 family. In terms of assembly, part of the 50S ribosomal subunit. Contacts protein L20.

In terms of biological role, this protein binds to 23S rRNA in the presence of protein L20. This chain is Large ribosomal subunit protein bL21, found in Ruthia magnifica subsp. Calyptogena magnifica.